The following is a 204-amino-acid chain: Urease accessory protein UreE (204 aa).

The span at 172 to 190 shows a compositional bias: basic and acidic residues; sequence HGHAHSHDHDHDHDHDHQH. The tract at residues 172–204 is disordered; sequence HGHAHSHDHDHDHDHDHQHGPGCTHGHHGHDHH.

The protein belongs to the UreE family.

It localises to the cytoplasm. In terms of biological role, involved in urease metallocenter assembly. Binds nickel. Probably functions as a nickel donor during metallocenter assembly. The polypeptide is Urease accessory protein UreE (Burkholderia orbicola (strain AU 1054)).